The chain runs to 1544 residues: Lysine-specific demethylase 5B (1544 aa).

The span at 1–14 (MEPATTLPPGPRPA) shows a compositional bias: pro residues. The interval 1–22 (MEPATTLPPGPRPALPLGGPGP) is disordered. Residues 32–73 (CPVFEPSWEEFADPFAFIHKIRPIAEQTGICKVRPPPDWQPP) form the JmjN domain. Residues 97–187 (TRVKLNFLDQ…ILNPYNLFLS (91 aa)) form the ARID domain. Residues Lys-148, Lys-204, Lys-209, Lys-242, Lys-274, and Lys-278 each participate in a glycyl lysine isopeptide (Lys-Gly) (interchain with G-Cter in SUMO2) cross-link. A disordered region spans residues 200–228 (TSDTKDKEYKPHDIPQRQSVQPAETCPPA). Residues 202–214 (DTKDKEYKPHDIP) are compositionally biased toward basic and acidic residues. The segment at 269 to 297 (NEKEMKSTIKQEPTEKKDCELESEKEKPK) is disordered. The PHD-type 1 zinc-finger motif lies at 309–359 (LYVCLLCGSGNDEDRLLLCDGCDDSYHTFCLVPPLHDVPKGDWRCPKCLAQ). Tyr-425 is a binding site for 2-oxoglutarate. Residues 453-619 (EYLDSGWNLN…LGRQCVEHYR (167 aa)) enclose the JmjC domain. Fe cation-binding residues include His-499 and Glu-501. Positions 507, 509, and 517 each coordinate 2-oxoglutarate. His-587 is a binding site for Fe cation. The segment at 692-744 (CIKCKTTCFMSAISCSCKPGLLVCLHHVKELCSCPPYKYNLRYRYTLDDLYPM) adopts a C5HC2 zinc-finger fold. Lys-769 participates in a covalent cross-link: Glycyl lysine isopeptide (Lys-Gly) (interchain with G-Cter in SUMO2). An N6-acetyllysine modification is found at Lys-832. A Phosphoserine modification is found at Ser-986. Residues 1176–1224 (MKVCLCQKTPATPMIQCELCRDAFHTSCVAAPSISQSSRIWLCPHCRRS) form a PHD-type 2 zinc finger. Residues 1297–1314 (QASATDKVSQPPGTTSFS) are compositionally biased toward polar residues. A disordered region spans residues 1297 to 1318 (QASATDKVSQPPGTTSFSLPDD). Ser-1328 carries the post-translational modification Phosphoserine. Positions 1374-1388 (PSSVQQADRSSPVRS) are enriched in polar residues. The interval 1374-1447 (PSSVQQADRS…IKLSHPKDMD (74 aa)) is disordered. Over residues 1389 to 1427 (SSEKNDCLRGKRDAINSPERKLKRRPEREGLPSERWDRV) the composition is skewed to basic and acidic residues. A compositionally biased stretch (basic residues) spans 1428-1441 (KHMRTPQKKKIKLS). Lys-1450 participates in a covalent cross-link: Glycyl lysine isopeptide (Lys-Gly) (interchain with G-Cter in SUMO2). Residue Ser-1456 is modified to Phosphoserine. A PHD-type 3 zinc finger spans residues 1484–1538 (DAICPAVSCLQPEGDEVDWVQCDGSCNQWFHQVCVGVSPEMAEKEDYICVRCTGK).

The protein belongs to the JARID1 histone demethylase family. As to quaternary structure, interacts with FOXG1B, PAX9, MYC, MYCN and RB1. Interacts with HDAC1, HDAC4, HDAC5 and HDAC7. Interacts (via PHD-type 1 zinc finger) with histone H3 unmodified at 'Lys-4'; the interaction is inhibited when histone H3 is methylated at 'Arg-2' or 'Lys-4'. It depends on Fe(2+) as a cofactor. As to expression, present at highest levels in testis, where it is enriched in spermatogonia and pachytene cells (at protein level).

The protein localises to the nucleus. It carries out the reaction N(6),N(6),N(6)-trimethyl-L-lysyl(4)-[histone H3] + 3 2-oxoglutarate + 3 O2 = L-lysyl(4)-[histone H3] + 3 formaldehyde + 3 succinate + 3 CO2. Functionally, histone demethylase that demethylates 'Lys-4' of histone H3, thereby playing a central role in histone code. Does not demethylate histone H3 'Lys-9' or H3 'Lys-27'. Demethylates trimethylated, dimethylated and monomethylated H3 'Lys-4'. Acts as a transcriptional corepressor for FOXG1B and PAX9. Represses the CLOCK-BMAL1 heterodimer-mediated transcriptional activation of the core clock component PER2. This is Lysine-specific demethylase 5B (Kdm5b) from Mus musculus (Mouse).